Here is a 537-residue protein sequence, read N- to C-terminus: uncharacterized protein (537 aa).

Belongs to the RuBisCO large chain family. Type IV subfamily.

In terms of biological role, unknown. Probably does not have RuBisCO activity. This is an uncharacterized protein from Symbiodinium sp. (Dinoflagellate).